The following is a 340-amino-acid chain: N-acetyl-gamma-glutamyl-phosphate reductase (340 aa).

The active site involves Cys-149.

The protein belongs to the NAGSA dehydrogenase family. Type 1 subfamily.

The protein resides in the cytoplasm. The enzyme catalyses N-acetyl-L-glutamate 5-semialdehyde + phosphate + NADP(+) = N-acetyl-L-glutamyl 5-phosphate + NADPH + H(+). Its pathway is amino-acid biosynthesis; L-arginine biosynthesis; N(2)-acetyl-L-ornithine from L-glutamate: step 3/4. Functionally, catalyzes the NADPH-dependent reduction of N-acetyl-5-glutamyl phosphate to yield N-acetyl-L-glutamate 5-semialdehyde. In Ruthia magnifica subsp. Calyptogena magnifica, this protein is N-acetyl-gamma-glutamyl-phosphate reductase.